The sequence spans 454 residues: Cobyrinate a,c-diamide synthase (454 aa).

One can recognise a GATase cobBQ-type domain in the interval Arg-244–Lys-440. Catalysis depends on Cys-326, which acts as the Nucleophile.

This sequence belongs to the CobB/CbiA family. The cofactor is Mg(2+).

It catalyses the reaction cob(II)yrinate + 2 L-glutamine + 2 ATP + 2 H2O = cob(II)yrinate a,c diamide + 2 L-glutamate + 2 ADP + 2 phosphate + 2 H(+). Its pathway is cofactor biosynthesis; adenosylcobalamin biosynthesis; cob(II)yrinate a,c-diamide from sirohydrochlorin (anaerobic route): step 10/10. Its function is as follows. Catalyzes the ATP-dependent amidation of the two carboxylate groups at positions a and c of cobyrinate, using either L-glutamine or ammonia as the nitrogen source. The chain is Cobyrinate a,c-diamide synthase from Limosilactobacillus reuteri subsp. reuteri (strain JCM 1112) (Lactobacillus reuteri).